A 237-amino-acid chain; its full sequence is Phosphoribosylaminoimidazole-succinocarboxamide synthase (237 aa).

Belongs to the SAICAR synthetase family.

The enzyme catalyses 5-amino-1-(5-phospho-D-ribosyl)imidazole-4-carboxylate + L-aspartate + ATP = (2S)-2-[5-amino-1-(5-phospho-beta-D-ribosyl)imidazole-4-carboxamido]succinate + ADP + phosphate + 2 H(+). The protein operates within purine metabolism; IMP biosynthesis via de novo pathway; 5-amino-1-(5-phospho-D-ribosyl)imidazole-4-carboxamide from 5-amino-1-(5-phospho-D-ribosyl)imidazole-4-carboxylate: step 1/2. This is Phosphoribosylaminoimidazole-succinocarboxamide synthase from Salmonella arizonae (strain ATCC BAA-731 / CDC346-86 / RSK2980).